We begin with the raw amino-acid sequence, 121 residues long: Ribosome-binding factor A (121 aa).

It belongs to the RbfA family. Monomer. Binds 30S ribosomal subunits, but not 50S ribosomal subunits or 70S ribosomes.

Its subcellular location is the cytoplasm. Its function is as follows. One of several proteins that assist in the late maturation steps of the functional core of the 30S ribosomal subunit. Associates with free 30S ribosomal subunits (but not with 30S subunits that are part of 70S ribosomes or polysomes). Required for efficient processing of 16S rRNA. May interact with the 5'-terminal helix region of 16S rRNA. The protein is Ribosome-binding factor A of Oenococcus oeni (strain ATCC BAA-331 / PSU-1).